Consider the following 92-residue polypeptide: Long neurotoxin 2 (92 aa).

A signal peptide spans 1 to 21; it reads MKTLLLTLVVVTIVCLDLGYT. Disulfide bonds link Cys24-Cys42, Cys35-Cys63, Cys48-Cys52, Cys67-Cys79, and Cys80-Cys85.

This sequence belongs to the three-finger toxin family. Long-chain subfamily. Type II alpha-neurotoxin sub-subfamily. In terms of tissue distribution, expressed by the venom gland.

The protein localises to the secreted. Its function is as follows. Binds with high affinity to muscular (alpha-1/CHRNA1) and neuronal (alpha-7/CHRNA7) nicotinic acetylcholine receptor (nAChR) and inhibits acetylcholine from binding to the receptor, thereby impairing neuromuscular and neuronal transmission. This Oxyuranus microlepidotus (Inland taipan) protein is Long neurotoxin 2.